Reading from the N-terminus, the 152-residue chain is SsrA-binding protein (152 aa).

The tract at residues Lys122–Asp152 is disordered. The span at Asp128–Asp152 shows a compositional bias: basic and acidic residues.

It belongs to the SmpB family.

The protein resides in the cytoplasm. Its function is as follows. Required for rescue of stalled ribosomes mediated by trans-translation. Binds to transfer-messenger RNA (tmRNA), required for stable association of tmRNA with ribosomes. tmRNA and SmpB together mimic tRNA shape, replacing the anticodon stem-loop with SmpB. tmRNA is encoded by the ssrA gene; the 2 termini fold to resemble tRNA(Ala) and it encodes a 'tag peptide', a short internal open reading frame. During trans-translation Ala-aminoacylated tmRNA acts like a tRNA, entering the A-site of stalled ribosomes, displacing the stalled mRNA. The ribosome then switches to translate the ORF on the tmRNA; the nascent peptide is terminated with the 'tag peptide' encoded by the tmRNA and targeted for degradation. The ribosome is freed to recommence translation, which seems to be the essential function of trans-translation. The protein is SsrA-binding protein of Caulobacter sp. (strain K31).